Consider the following 447-residue polypeptide: Oxysterols receptor LXR-alpha (447 aa).

Positions 1 to 88 are disordered; the sequence is MSLWLEAPVP…LRPQKRKKGP (88 aa). The tract at residues 1–96 is transactivation AF-1; required for ligand-independent transactivation function; it reads MSLWLEAPVP…GPAPKMLGNE (96 aa). Residues 95–170 constitute a DNA-binding region (nuclear receptor); it reads NELCSVCGDK…AGMREECVLS (76 aa). 2 NR C4-type zinc fingers span residues 98 to 118 and 134 to 158; these read CSVC…CEGC and CHSG…LRKC. The tract at residues 178-203 is disordered; the sequence is KMKRQEEEQAQATSAPPRASSPPQVL. Low complexity predominate over residues 187–203; that stretch reads AQATSAPPRASSPPQVL. Residues 205-447 form a transactivation AF-2; required for ligand-dependent transactivation function; mediates interaction with CCAR2 region; it reads QLSPEQLGMI…LLSEIWDVHE (243 aa). The region spanning 209–447 is the NR LBD domain; sequence EQLGMIEKLV…LLSEIWDVHE (239 aa).

This sequence belongs to the nuclear hormone receptor family. NR1 subfamily. As to quaternary structure, heterodimer of NR1H3 and RXR (retinoic acid receptor). Interacts with CCAR2 (via N-terminus) in a ligand-independent manner. Interacts with SIRT1 and this interaction is inhibited by CCAR2. In terms of processing, ubiquitinated by UBR5, leading to its degradation: UBR5 specifically recognizes and binds ligand-bound NR1H3 when it is not associated with coactivators (NCOAs). In presence of NCOAs, the UBR5-degron is not accessible, preventing its ubiquitination and degradation.

It is found in the nucleus. It localises to the cytoplasm. Its function is as follows. Nuclear receptor that exhibits a ligand-dependent transcriptional activation activity. Interaction with retinoic acid receptor (RXR) shifts RXR from its role as a silent DNA-binding partner to an active ligand-binding subunit in mediating retinoid responses through target genes defined by LXRES. LXRES are DR4-type response elements characterized by direct repeats of two similar hexanuclotide half-sites spaced by four nucleotides. Plays an important role in the regulation of cholesterol homeostasis, regulating cholesterol uptake through MYLIP-dependent ubiquitination of LDLR, VLDLR and LRP8. Interplays functionally with RORA for the regulation of genes involved in liver metabolism. Induces LPCAT3-dependent phospholipid remodeling in endoplasmic reticulum (ER) membranes of hepatocytes, driving SREBF1 processing and lipogenesis. Via LPCAT3, triggers the incorporation of arachidonate into phosphatidylcholines of ER membranes, increasing membrane dynamics and enabling triacylglycerols transfer to nascent very low-density lipoprotein (VLDL) particles. Via LPCAT3 also counteracts lipid-induced ER stress response and inflammation, likely by modulating SRC kinase membrane compartmentalization and limiting the synthesis of lipid inflammatory mediators. The chain is Oxysterols receptor LXR-alpha (NR1H3) from Bos taurus (Bovine).